The following is a 457-amino-acid chain: Forkhead box protein N3 (457 aa).

The tract at residues 1 to 24 (MGPVMPASKKAESSGISVSSGLSQ) is disordered. Residues 13–23 (SSGISVSSGLS) show a composition bias toward low complexity. 3 positions are modified to phosphoserine: serine 83, serine 85, and serine 97. The segment at 86–109 (PVQDLDDDTPPSPAHSDMPYDARQ) is disordered. The segment at residues 114–210 (KPPYSFSCLI…QALKKTPYHP (97 aa)) is a DNA-binding region (fork-head). The interval 285–422 (RTESEPPCGS…PESDDEEMKE (138 aa)) is disordered. 2 stretches are compositionally biased toward low complexity: residues 308-331 (SSAK…SSSS) and 342-353 (GSQEGSEGSFQS). Positions 354 to 376 (HESHSEPEEEDRKPSPKEGKDAL) are enriched in basic and acidic residues. Positions 384 to 396 (QHKKRQHFAKARK) are enriched in basic residues. Serine 415 carries the phosphoserine modification.

As to quaternary structure, interacts through its C-terminus with the C-terminus of SNW1/SKIP.

The protein resides in the nucleus. In terms of biological role, acts as a transcriptional repressor. May be involved in DNA damage-inducible cell cycle arrests (checkpoints). The chain is Forkhead box protein N3 (Foxn3) from Mus musculus (Mouse).